A 219-amino-acid polypeptide reads, in one-letter code: uncharacterized protein (219 aa).

Residues 1 to 26 (MNDRGVPNSRTGPSLLALLPAANSYA) form the signal peptide. 2 disordered regions span residues 36–57 (AVGVGGGSYKSPTRGSPGTRGG) and 88–219 (SGLG…GLCE). Residues 127–173 (LSPPSALGSSPAGRGRPAPAIAAAKSSPLSASAAPGRCGARPRAPSR) are compositionally biased toward low complexity. A compositionally biased stretch (basic residues) spans 176–202 (RERRPRGNPRAPLRRGARGRRRSHTRG).

This is an uncharacterized protein from Gallid herpesvirus 2 (strain Chicken/Md5/ATCC VR-987) (GaHV-2).